Reading from the N-terminus, the 386-residue chain is Phosphoglycerate kinase (386 aa).

Residues Asp-21–Asn-23, Arg-36, His-59–Arg-62, Arg-113, and Arg-146 each bind substrate. Residues Lys-197, Glu-313, and Gly-339 to Thr-342 contribute to the ATP site.

Belongs to the phosphoglycerate kinase family. Monomer.

It localises to the cytoplasm. It catalyses the reaction (2R)-3-phosphoglycerate + ATP = (2R)-3-phospho-glyceroyl phosphate + ADP. It participates in carbohydrate degradation; glycolysis; pyruvate from D-glyceraldehyde 3-phosphate: step 2/5. The chain is Phosphoglycerate kinase from Serratia proteamaculans (strain 568).